Reading from the N-terminus, the 213-residue chain is Octanoyltransferase (213 aa).

Residues 28–203 enclose the BPL/LPL catalytic domain; it reads GTSPETLLLL…RFPFLLDERL (176 aa). Substrate contacts are provided by residues 66–73, 133–135, and 146–148; these read RGGDVTFH, SIG, and GFA. The Acyl-thioester intermediate role is filled by C164.

The protein belongs to the LipB family.

It is found in the cytoplasm. It catalyses the reaction octanoyl-[ACP] + L-lysyl-[protein] = N(6)-octanoyl-L-lysyl-[protein] + holo-[ACP] + H(+). Its pathway is protein modification; protein lipoylation via endogenous pathway; protein N(6)-(lipoyl)lysine from octanoyl-[acyl-carrier-protein]: step 1/2. In terms of biological role, catalyzes the transfer of endogenously produced octanoic acid from octanoyl-acyl-carrier-protein onto the lipoyl domains of lipoate-dependent enzymes. Lipoyl-ACP can also act as a substrate although octanoyl-ACP is likely to be the physiological substrate. The polypeptide is Octanoyltransferase (Geobacter metallireducens (strain ATCC 53774 / DSM 7210 / GS-15)).